We begin with the raw amino-acid sequence, 299 residues long: Glutamyl-Q tRNA(Asp) synthetase (299 aa).

L-glutamate-binding positions include 9–13 and Glu-45; that span reads RFAPS. A 'HIGH' region motif is present at residues 12–22; it reads PSPTGPLHFGS. Cys-101, Cys-103, and Cys-118 together coordinate Zn(2+). L-glutamate is bound by residues Tyr-170 and Arg-188. Positions 226–230 match the 'KMSKS' region motif; the sequence is KLSKS. Residue Lys-229 coordinates ATP.

Belongs to the class-I aminoacyl-tRNA synthetase family. GluQ subfamily. It depends on Zn(2+) as a cofactor.

Functionally, catalyzes the tRNA-independent activation of glutamate in presence of ATP and the subsequent transfer of glutamate onto a tRNA(Asp). Glutamate is transferred on the 2-amino-5-(4,5-dihydroxy-2-cyclopenten-1-yl) moiety of the queuosine in the wobble position of the QUC anticodon. The protein is Glutamyl-Q tRNA(Asp) synthetase of Xanthomonas axonopodis pv. citri (strain 306).